The chain runs to 382 residues: Chaperone protein DnaJ (382 aa).

One can recognise a J domain in the interval 5-70 (DYYEVLGLQK…QKRAAYDQYG (66 aa)). Residues 134-212 (GTTKDIQINT…CHGEGRVHKK (79 aa)) form a CR-type zinc finger. 8 residues coordinate Zn(2+): cysteine 147, cysteine 150, cysteine 164, cysteine 167, cysteine 186, cysteine 189, cysteine 200, and cysteine 203. CXXCXGXG motif repeat units follow at residues 147–154 (CDSCGGSG), 164–171 (CPHCHGSG), 186–193 (CPTCHGSG), and 200–207 (CRNCHGEG).

The protein belongs to the DnaJ family. In terms of assembly, homodimer. It depends on Zn(2+) as a cofactor.

The protein localises to the cytoplasm. Functionally, participates actively in the response to hyperosmotic and heat shock by preventing the aggregation of stress-denatured proteins and by disaggregating proteins, also in an autonomous, DnaK-independent fashion. Unfolded proteins bind initially to DnaJ; upon interaction with the DnaJ-bound protein, DnaK hydrolyzes its bound ATP, resulting in the formation of a stable complex. GrpE releases ADP from DnaK; ATP binding to DnaK triggers the release of the substrate protein, thus completing the reaction cycle. Several rounds of ATP-dependent interactions between DnaJ, DnaK and GrpE are required for fully efficient folding. Also involved, together with DnaK and GrpE, in the DNA replication of plasmids through activation of initiation proteins. The polypeptide is Chaperone protein DnaJ (Haemophilus influenzae (strain ATCC 51907 / DSM 11121 / KW20 / Rd)).